The chain runs to 967 residues: Leucine-rich repeat-containing G-protein coupled receptor 6 (967 aa).

The first 24 residues, 1–24, serve as a signal peptide directing secretion; that stretch reads MPSPPGLRALWLCAALCASRRAGG. The Extracellular portion of the chain corresponds to 25–567; it reads APQPGPGPTA…LFESWGIRLA (543 aa). Residues 26-66 form the LRRNT domain; sequence PQPGPGPTACPAPCHCQEDGIMLSADCSELGLSAVPGDLDP. N-linked (GlcNAc...) asparagine glycosylation is present at Asn77. LRR repeat units follow at residues 91-112, 115-136, 139-160, 163-186, 187-208, 211-232, 235-256, 258-279, 282-303, 306-328, 329-350, 353-374, 375-396, 399-420, and 423-443; these read FLEELRLSGNHLSHIPGQAFSG, SLKILMLQNNQLGGIPAEALWE, SLQSLRLDANLISLVPERSFEG, SLRHLWLDDNALTEIPVRALNNLP, ALQAMTLALNRISHIPDYAFQN, SLVVLHLHNNRIQHLGTHSFEG, NLETLDLNYNKLQEFPVAIRTL, RLQELGFHNNNIKAIPEKAFMG, LLQTIHFYDNPIQFVGRSAFQY, KLHTLSLNGAMDIQEFPDLKGTT, SLEILTLTRAGIRLLPSGMCQQ, RLRVLELSHNQIEELPSLHRCQ, KLEEIGLQHNRIWEIGADTFSQ, SLQALDLSWNAIRSIHPEAFST, and SLVKLDLTDNQLTTLPLAGLG. Residue Asn208 is glycosylated (N-linked (GlcNAc...) asparagine). The chain crosses the membrane as a helical span at residues 568 to 588; sequence VWAIVLLSVLCNGLVLLTVFA. Residues 589 to 598 lie on the Cytoplasmic side of the membrane; that stretch reads GGPVPLPPVK. A helical transmembrane segment spans residues 599 to 619; sequence FVVGAIAGANTLTGISCGLLA. At 620-644 the chain is on the extracellular side; it reads SVDALTFGQFSEYGARWETGLGCRA. Cys642 and Cys717 are joined by a disulfide. A helical membrane pass occupies residues 645–665; that stretch reads TGFLAVLGSEASVLLLTLAAV. Over 666–687 the chain is Cytoplasmic; sequence QCSVSVSCVRAYGKSPSLGSVR. Residues 688-708 traverse the membrane as a helical segment; that stretch reads AGVLGCLALAGLAAALPLASV. The Extracellular segment spans residues 709-727; it reads GEYGASPLCLPYAPPEGQP. A helical transmembrane segment spans residues 728 to 748; sequence AALGFTVALVMMNSFCFLVVA. Topologically, residues 749-774 are cytoplasmic; that stretch reads GAYIKLYCDLPRGDFEAVWDCAMVRH. Residues 775–795 form a helical membrane-spanning segment; sequence VAWLIFADGLLYCPVAFLSFA. Residues 796–809 are Extracellular-facing; it reads SMLGLFPVTPEAVK. Residues 810-830 traverse the membrane as a helical segment; the sequence is SVLLVVLPLPACLNPLLYLLF. Residues 831–967 lie on the Cytoplasmic side of the membrane; sequence NPHFRDDLRR…PSGLAFASHV (137 aa).

Belongs to the G-protein coupled receptor 1 family.

It is found in the cell membrane. Functionally, receptor for R-spondins that potentiates the canonical Wnt signaling pathway and acts as a marker of multipotent stem cells in the epidermis. Upon binding to R-spondins (RSPO1, RSPO2, RSPO3 or RSPO4), associates with phosphorylated LRP6 and frizzled receptors that are activated by extracellular Wnt receptors, triggering the canonical Wnt signaling pathway to increase expression of target genes. In contrast to classical G-protein coupled receptors, does not activate heterotrimeric G-proteins to transduce the signal. May act as a tumor suppressor. This Homo sapiens (Human) protein is Leucine-rich repeat-containing G-protein coupled receptor 6 (LGR6).